A 274-amino-acid polypeptide reads, in one-letter code: Thiamine kinase (274 aa).

This sequence belongs to the thiamine kinase family.

It carries out the reaction thiamine + ATP = thiamine phosphate + ADP + H(+). It functions in the pathway cofactor biosynthesis; thiamine diphosphate biosynthesis; thiamine phosphate from thiamine: step 1/1. Functionally, catalyzes the ATP-dependent phosphorylation of thiamine to thiamine phosphate. Is involved in thiamine salvage. In Escherichia coli O157:H7 (strain EC4115 / EHEC), this protein is Thiamine kinase.